The chain runs to 749 residues: Pectate disaccharide-lyase (749 aa).

Positions 1–26 (MKYAASGLLSVALNSLLLLGSNQRFA) are cleaved as a signal peptide. The Ca(2+) site is built by Asp538, Asp562, Asp563, and Asp566. The active-site Proton acceptor is Lys595.

The protein belongs to the polysaccharide lyase 9 family. It depends on Ca(2+) as a cofactor.

The protein resides in the secreted. It carries out the reaction [(1-&gt;4)-alpha-D-galacturonosyl](n) = 4-(4-deoxy-alpha-D-galact-4-enuronosyl)-D-galacturonate + [(1-&gt;4)-alpha-D-galacturonosyl](n-2). Its activity is regulated as follows. Activity on pectate is nearly completely inhibited by ethyleneglycol-bis-(P-aminoethyl ether) N,N'-tetraacetic acid (EGTA), EDTA or nitrilotriacetic acid. Activity is specifically restored by the addition of Ca(2+). Exo-cleaving lyase that catalyzes the digestion of pectate. Contributes to pectate catabolism but not to bacterial virulence. In vitro can also use citrus pectin and highly methyl-esterified Link pectin as substrates. This Dickeya chrysanthemi (Pectobacterium chrysanthemi) protein is Pectate disaccharide-lyase.